A 153-amino-acid chain; its full sequence is Small ribosomal subunit protein uS7c (153 aa).

Belongs to the universal ribosomal protein uS7 family. As to quaternary structure, part of the 30S ribosomal subunit.

Its subcellular location is the plastid. In terms of biological role, one of the primary rRNA binding proteins, it binds directly to 16S rRNA where it nucleates assembly of the head domain of the 30S subunit. This chain is Small ribosomal subunit protein uS7c (rps7), found in Helicosporidium sp. subsp. Simulium jonesii (Green alga).